The chain runs to 987 residues: Rho GTPase-activating protein 6 (987 aa).

The segment covering Met1 to Thr21 has biased composition (polar residues). Disordered stretches follow at residues Met1–Thr60, Ser76–Phe117, and Gly144–Ser170. Residue Ser37 is modified to Phosphoserine. Gly residues predominate over residues Gly44–Arg57. The segment covering Ser100–Gly115 has biased composition (polar residues). Residues Gly144 to Ser159 are compositionally biased toward low complexity. At Ser265 the chain carries Phosphoserine. The tract at residues Lys324–Ala363 is disordered. Positions Glu328–Asn350 are enriched in low complexity. Positions Asn344–Pro354 match the SH3-binding motif. At Ser365 the chain carries Phosphoserine. The region spanning Leu403 to Phe604 is the Rho-GAP domain. Residues Asp641 to Pro676 are disordered. Residues Thr658 to Pro676 show a composition bias toward polar residues. 9 positions are modified to phosphoserine: Ser669, Ser675, Ser682, Ser713, Ser758, Ser776, Ser781, Ser790, and Ser824. The disordered stretch occupies residues Gly709 to Met731. 2 disordered regions span residues Thr825–Ser847 and Trp863–Gln953. The segment covering Leu939 to Ser948 has biased composition (low complexity). Residues Ser941 and Ser944 each carry the phosphoserine modification.

In terms of tissue distribution, expressed in retina and lung.

The protein localises to the cytoplasm. GTPase activator for the Rho-type GTPases by converting them to an inactive GDP-bound state. Could regulate the interactions of signaling molecules with the actin cytoskeleton. Promotes continuous elongation of cytoplasmic processes during cell motility and simultaneous retraction of the cell body changing the cell morphology. This Mus musculus (Mouse) protein is Rho GTPase-activating protein 6 (Arhgap6).